Consider the following 848-residue polypeptide: Dynein axonemal intermediate chain 4 (848 aa).

2 disordered regions span residues 345–370 (SKAN…SETS) and 431–464 (EPEP…IHAE). Residues 359-370 (PGSTTEKNSETS) are compositionally biased toward polar residues. The span at 442–456 (ESAKHEEVEEESKKE) shows a compositional bias: basic and acidic residues. WD repeat units follow at residues 534 to 574 (QSPY…NVPV), 583 to 631 (KHLG…DCYD), 658 to 698 (SRQA…QYLD), 702 to 742 (GHKG…PSLS), 745 to 784 (PATS…LDPL), and 790 to 829 (NPGI…TVLE).

Part of the multisubunit axonemal dynein complex formed at least of two heavy chains and a number of intermediate and light chains. Associated with axonemal dynein subunits such as, DNAH2, DNAI3, and DYNLT1. Interacts with DYNLT1.

It localises to the cytoplasm. The protein resides in the cytoskeleton. The protein localises to the flagellum axoneme. Its subcellular location is the cilium axoneme. It is found in the dynein axonemal particle. Functionally, plays a critical role in the assembly of axonemal dynein complex, thereby playing a role in ciliary motility. The polypeptide is Dynein axonemal intermediate chain 4 (Homo sapiens (Human)).